The primary structure comprises 351 residues: Tropomodulin-2 (351 aa).

S25 is modified (phosphoserine).

It belongs to the tropomodulin family. As to quaternary structure, binds to the N-terminus of tropomyosin and to actin. Binds to TMBr3 as well as to other low molecular mass tropomyosins (TM5a or TM5), but not to high molecular mass tropomyosins (TM2 or TMBr1). In terms of tissue distribution, neuronal-tissue specific.

It is found in the cytoplasm. The protein resides in the cytoskeleton. Functionally, blocks the elongation and depolymerization of the actin filaments at the pointed end. The Tmod/TM complex contributes to the formation of the short actin protofilament, which in turn defines the geometry of the membrane skeleton. This chain is Tropomodulin-2 (Tmod2), found in Rattus norvegicus (Rat).